The chain runs to 219 residues: Histone H1.01 (219 aa).

Low complexity-rich tracts occupy residues 1–19 (MSET…GAKA) and 27–39 (AAGG…PAGP). Disordered stretches follow at residues 1–40 (MSET…AGPS) and 94–219 (LVQT…AKKK). S2 is subject to N-acetylserine. The region spanning 37 to 110 (AGPSVTELIT…GASGSFRLNK (74 aa)) is the H15 domain. Composition is skewed to basic residues over residues 119-134 (APRK…KPAA), 142-159 (KKPK…KAKK), 167-185 (KAAK…KKAA), and 192-219 (KAVK…AKKK).

This sequence belongs to the histone H1/H5 family.

The protein localises to the nucleus. Its subcellular location is the chromosome. Histones H1 are necessary for the condensation of nucleosome chains into higher-order structures. This chain is Histone H1.01, found in Gallus gallus (Chicken).